Reading from the N-terminus, the 242-residue chain is MRLIVTKNYEEMSKVAAKEMAEDIKRNPEIVLGLATGGTPVGMYKELIRMYNEGELDFSKVTSINLDEYVGLSGDHDQSYRYFMNTNLFNHINIDKNNTFVPNGLAENVEEECMAYDARIQDMGGIDLQLLGLGANGHIGFNEPGEALSVGTHLTDLKESTIEANARFFDSIDDVPRKAITMGLGGIMKAKKIMVIASGEGKAEVVKAMMSGKITTEIPATMLQMHRDVILIVDEDAAKLLK.

The active-site Proton acceptor; for enolization step is the aspartate 67. Asparagine 136 functions as the For ring-opening step in the catalytic mechanism. Histidine 138 acts as the Proton acceptor; for ring-opening step in catalysis. Residue glutamate 143 is the For ring-opening step of the active site.

This sequence belongs to the glucosamine/galactosamine-6-phosphate isomerase family. NagB subfamily.

The enzyme catalyses alpha-D-glucosamine 6-phosphate + H2O = beta-D-fructose 6-phosphate + NH4(+). The protein operates within amino-sugar metabolism; N-acetylneuraminate degradation; D-fructose 6-phosphate from N-acetylneuraminate: step 5/5. Its function is as follows. Catalyzes the reversible isomerization-deamination of glucosamine 6-phosphate (GlcN6P) to form fructose 6-phosphate (Fru6P) and ammonium ion. In Clostridium perfringens (strain ATCC 13124 / DSM 756 / JCM 1290 / NCIMB 6125 / NCTC 8237 / Type A), this protein is Glucosamine-6-phosphate deaminase.